A 378-amino-acid polypeptide reads, in one-letter code: Glutamate 5-kinase (378 aa).

K20 serves as a coordination point for ATP. 3 residues coordinate substrate: S60, D147, and N159. Residues 179–180 (TD) and 221–227 (TGGMATK) each bind ATP. A PUA domain is found at 286–364 (AGDIVIDAGA…QEIYKVLGYE (79 aa)).

It belongs to the glutamate 5-kinase family.

Its subcellular location is the cytoplasm. It carries out the reaction L-glutamate + ATP = L-glutamyl 5-phosphate + ADP. Its pathway is amino-acid biosynthesis; L-proline biosynthesis; L-glutamate 5-semialdehyde from L-glutamate: step 1/2. Catalyzes the transfer of a phosphate group to glutamate to form L-glutamate 5-phosphate. This chain is Glutamate 5-kinase, found in Photobacterium profundum (strain SS9).